The following is a 345-amino-acid chain: Anthranilate phosphoribosyltransferase (345 aa).

5-phospho-alpha-D-ribose 1-diphosphate-binding positions include Gly-80, 83-84 (GD), Thr-88, 90-93 (NIST), 108-116 (KHGNRSVSS), and Ser-120. Gly-80 is a binding site for anthranilate. Ser-92 is a Mg(2+) binding site. Asn-111 contributes to the anthranilate binding site. Arg-166 lines the anthranilate pocket. The Mg(2+) site is built by Asp-225 and Glu-226.

This sequence belongs to the anthranilate phosphoribosyltransferase family. Homodimer. Requires Mg(2+) as cofactor.

The catalysed reaction is N-(5-phospho-beta-D-ribosyl)anthranilate + diphosphate = 5-phospho-alpha-D-ribose 1-diphosphate + anthranilate. Its pathway is amino-acid biosynthesis; L-tryptophan biosynthesis; L-tryptophan from chorismate: step 2/5. In terms of biological role, catalyzes the transfer of the phosphoribosyl group of 5-phosphorylribose-1-pyrophosphate (PRPP) to anthranilate to yield N-(5'-phosphoribosyl)-anthranilate (PRA). This is Anthranilate phosphoribosyltransferase from Desulforamulus reducens (strain ATCC BAA-1160 / DSM 100696 / MI-1) (Desulfotomaculum reducens).